The primary structure comprises 125 residues: Large ribosomal subunit protein eL31 (125 aa).

This sequence belongs to the eukaryotic ribosomal protein eL31 family. In terms of assembly, component of the large ribosomal subunit.

It is found in the cytoplasm. Component of the large ribosomal subunit. The ribosome is a large ribonucleoprotein complex responsible for the synthesis of proteins in the cell. The sequence is that of Large ribosomal subunit protein eL31 (rpl31) from Ictalurus punctatus (Channel catfish).